Reading from the N-terminus, the 229-residue chain is Rab-like protein 2A (229 aa).

GTP is bound by residues 28 to 35 (GDSAVGKS), 76 to 80 (DTAGQ), and 133 to 136 (NKID). The disordered stretch occupies residues 200 to 229 (NLEQEEEDVPDQEQSGSIETPSEEVASPHS).

The protein belongs to the small GTPase superfamily. Rab family. In terms of assembly, interacts with IFT27, IFT81, IFT172, ATP6V1E1, HK1, LDHC, MAPRE1 and HSPA2.

Its function is as follows. Plays an essential role in male fertility, sperm intra-flagellar transport, and tail assembly. Binds, in a GTP-regulated manner, to a specific set of effector proteins including key proteins involved in cilia development and function and delivers them into the growing sperm tail. The chain is Rab-like protein 2A (RABL2A) from Pongo abelii (Sumatran orangutan).